The following is a 162-amino-acid chain: Peptide methionine sulfoxide reductase MsrA (162 aa).

Cysteine 16 is a catalytic residue.

The protein belongs to the MsrA Met sulfoxide reductase family.

The catalysed reaction is L-methionyl-[protein] + [thioredoxin]-disulfide + H2O = L-methionyl-(S)-S-oxide-[protein] + [thioredoxin]-dithiol. The enzyme catalyses [thioredoxin]-disulfide + L-methionine + H2O = L-methionine (S)-S-oxide + [thioredoxin]-dithiol. Functionally, has an important function as a repair enzyme for proteins that have been inactivated by oxidation. Catalyzes the reversible oxidation-reduction of methionine sulfoxide in proteins to methionine. The protein is Peptide methionine sulfoxide reductase MsrA of Geobacter sulfurreducens (strain ATCC 51573 / DSM 12127 / PCA).